Consider the following 677-residue polypeptide: DNA ligase (677 aa).

NAD(+) contacts are provided by residues 36–40 (DAEYD), 85–86 (SI), and Glu-122. The active-site N6-AMP-lysine intermediate is Lys-124. 4 residues coordinate NAD(+): Arg-145, Glu-181, Lys-298, and Lys-322. Zn(2+) is bound by residues Cys-416, Cys-419, Cys-434, and Cys-440. Residues 600 to 677 (LTPRPLAGKT…DEAALRALLD (78 aa)) form the BRCT domain.

The protein belongs to the NAD-dependent DNA ligase family. LigA subfamily. Mg(2+) is required as a cofactor. Mn(2+) serves as cofactor.

It carries out the reaction NAD(+) + (deoxyribonucleotide)n-3'-hydroxyl + 5'-phospho-(deoxyribonucleotide)m = (deoxyribonucleotide)n+m + AMP + beta-nicotinamide D-nucleotide.. DNA ligase that catalyzes the formation of phosphodiester linkages between 5'-phosphoryl and 3'-hydroxyl groups in double-stranded DNA using NAD as a coenzyme and as the energy source for the reaction. It is essential for DNA replication and repair of damaged DNA. The chain is DNA ligase from Methylibium petroleiphilum (strain ATCC BAA-1232 / LMG 22953 / PM1).